The chain runs to 123 residues: Large ribosomal subunit protein bL12 (123 aa).

The interval 98 to 123 (KEGVSKEEAEEIKSKLEDAGATVELK) is disordered. The span at 100–115 (GVSKEEAEEIKSKLED) shows a compositional bias: basic and acidic residues.

It belongs to the bacterial ribosomal protein bL12 family. In terms of assembly, homodimer. Part of the ribosomal stalk of the 50S ribosomal subunit. Forms a multimeric L10(L12)X complex, where L10 forms an elongated spine to which 2 to 4 L12 dimers bind in a sequential fashion. Binds GTP-bound translation factors.

Its function is as follows. Forms part of the ribosomal stalk which helps the ribosome interact with GTP-bound translation factors. Is thus essential for accurate translation. The polypeptide is Large ribosomal subunit protein bL12 (Halothermothrix orenii (strain H 168 / OCM 544 / DSM 9562)).